We begin with the raw amino-acid sequence, 264 residues long: ATP synthase subunit a (264 aa).

A run of 5 helical transmembrane segments spans residues Leu-39–Val-59, Val-97–Val-117, Thr-139–Tyr-159, Leu-205–Trp-225, and Leu-239–Leu-259.

It belongs to the ATPase A chain family. In terms of assembly, F-type ATPases have 2 components, CF(1) - the catalytic core - and CF(0) - the membrane proton channel. CF(1) has five subunits: alpha(3), beta(3), gamma(1), delta(1), epsilon(1). CF(0) has three main subunits: a(1), b(2) and c(9-12). The alpha and beta chains form an alternating ring which encloses part of the gamma chain. CF(1) is attached to CF(0) by a central stalk formed by the gamma and epsilon chains, while a peripheral stalk is formed by the delta and b chains.

Its subcellular location is the cell inner membrane. In terms of biological role, key component of the proton channel; it plays a direct role in the translocation of protons across the membrane. This is ATP synthase subunit a from Coxiella burnetii (strain Dugway 5J108-111).